The chain runs to 331 residues: 2-hydroxyacid dehydrogenase homolog (331 aa).

NAD(+) is bound by residues 154–155 (KI), 232–234 (TSR), and D258. R234 is an active-site residue. The active site involves E263. H295 (proton donor) is an active-site residue. 295–298 (HQAF) contributes to the NAD(+) binding site.

It belongs to the D-isomer specific 2-hydroxyacid dehydrogenase family.

This is 2-hydroxyacid dehydrogenase homolog (ddh) from Haemophilus influenzae (strain ATCC 51907 / DSM 11121 / KW20 / Rd).